The chain runs to 368 residues: Phosphoserine aminotransferase (368 aa).

An L-glutamate-binding site is contributed by Arg44. Residues 78–79 (AT), Trp104, Thr157, Asp179, and Gln202 each bind pyridoxal 5'-phosphate. Residue Lys203 is modified to N6-(pyridoxal phosphate)lysine. 244-245 (NT) provides a ligand contact to pyridoxal 5'-phosphate.

The protein belongs to the class-V pyridoxal-phosphate-dependent aminotransferase family. SerC subfamily. As to quaternary structure, homodimer. Pyridoxal 5'-phosphate is required as a cofactor.

Its subcellular location is the cytoplasm. The enzyme catalyses O-phospho-L-serine + 2-oxoglutarate = 3-phosphooxypyruvate + L-glutamate. It catalyses the reaction 4-(phosphooxy)-L-threonine + 2-oxoglutarate = (R)-3-hydroxy-2-oxo-4-phosphooxybutanoate + L-glutamate. Its pathway is amino-acid biosynthesis; L-serine biosynthesis; L-serine from 3-phospho-D-glycerate: step 2/3. The protein operates within cofactor biosynthesis; pyridoxine 5'-phosphate biosynthesis; pyridoxine 5'-phosphate from D-erythrose 4-phosphate: step 3/5. Catalyzes the reversible conversion of 3-phosphohydroxypyruvate to phosphoserine and of 3-hydroxy-2-oxo-4-phosphonooxybutanoate to phosphohydroxythreonine. This is Phosphoserine aminotransferase from Neisseria meningitidis serogroup C / serotype 2a (strain ATCC 700532 / DSM 15464 / FAM18).